The primary structure comprises 331 residues: Phospholipase A2 inhibitor (331 aa).

The N-terminal stretch at 1–23 (MKSSVPSLLIACLVMSLNSYTQQ) is a signal peptide. N35 carries an N-linked (GlcNAc...) asparagine glycan. LRR repeat units follow at residues 78-101 (LPNL…LFRN), 103-125 (PQLH…IFTN), 127-149 (SSLI…WFQT), 150-173 (LGEL…CFDK), 175-197 (KKLT…MFSG), 199-221 (DNLE…TFHW), 223-244 (PKLT…FFQP), and 245-268 (LEQL…VYKT). N125 is a glycosylation site (N-linked (GlcNAc...) asparagine). A glycan (N-linked (GlcNAc...) asparagine) is linked at N232. N-linked (GlcNAc...) asparagine glycosylation is present at N271. The 52-residue stretch at 279–330 (NPWACDCRLDNLLTWVNEHNIHLYSKEEIVCASPKHFKGECATSLHKSQICP) folds into the LRRCT domain.

As to quaternary structure, homotrimer.

It localises to the secreted. Inhibits the enzymatic activity of the basic phospholipase A2 (PLA2). The polypeptide is Phospholipase A2 inhibitor (Gloydius brevicaudus siniticus (Chinese mamushi)).